Here is a 363-residue protein sequence, read N- to C-terminus: Dihydroorotate dehydrogenase (quinone) (363 aa).

FMN is bound by residues 62 to 66 (AGYDK) and threonine 86. Residue lysine 66 participates in substrate binding. Residue 111 to 115 (NRLGF) coordinates substrate. FMN-binding residues include asparagine 139 and asparagine 170. Substrate is bound at residue asparagine 170. Serine 173 serves as the catalytic Nucleophile. Residue asparagine 175 coordinates substrate. Residues lysine 215 and serine 243 each contribute to the FMN site. Residue 244 to 245 (NT) coordinates substrate. FMN contacts are provided by residues glycine 266, glycine 295, and 316–317 (YS).

The protein belongs to the dihydroorotate dehydrogenase family. Type 2 subfamily. As to quaternary structure, monomer. The cofactor is FMN.

The protein resides in the cell membrane. The catalysed reaction is (S)-dihydroorotate + a quinone = orotate + a quinol. It functions in the pathway pyrimidine metabolism; UMP biosynthesis via de novo pathway; orotate from (S)-dihydroorotate (quinone route): step 1/1. Functionally, catalyzes the conversion of dihydroorotate to orotate with quinone as electron acceptor. The polypeptide is Dihydroorotate dehydrogenase (quinone) (Agrobacterium fabrum (strain C58 / ATCC 33970) (Agrobacterium tumefaciens (strain C58))).